Reading from the N-terminus, the 3072-residue chain is Platelet binding protein GspB (3072 aa).

The first 85 residues, 1 to 85, serve as a signal peptide directing secretion; sequence MFFKRQKGQY…AVLGGAVVTS (85 aa). 10 disordered regions span residues 117-147, 182-254, 876-909, 936-969, 1024-2085, 2106-2139, 2173-2223, 2250-2595, 2625-2965, and 3014-3045; these read EAAT…SASS, SESL…APNV, SAST…SVSA, SASV…SVSA, VSAS…SVSA, TSAS…NASV, and SQSL…GESE. The span at 118 to 127 shows a compositional bias: polar residues; that stretch reads AATTLSSTEA. The interval 123–236 is ser-rich region 1 (SSR1); sequence SSTEANPVES…SSQQSTEASS (114 aa). Composition is skewed to low complexity over residues 131–147 and 182–238; these read ESLS…SASS and SESL…SSQT. The tract at residues 237-603 is basic region (BR); sequence QTGRRRTRRA…GSKFIDTRAG (367 aa). The ser-rich region 2 (SSR2) stretch occupies residues 604 to 3028; that stretch reads SISKSQSTSN…ESQSSSASQS (2425 aa). A compositionally biased stretch (low complexity) spans 3014 to 3028; it reads SQSLSESQSSSASQS. The short motif at 3038–3042 is the LPXTG sorting signal element; sequence LPRTG. Residue Thr3041 is modified to Pentaglycyl murein peptidoglycan amidated threonine. A propeptide spans 3042–3072 (removed by sortase); that stretch reads GESENKASILALGLGALGLAFKKRKKNESED.

It belongs to the serine-rich repeat protein (SRRP) family. As to quaternary structure, both SSR domains in the unglycosylated protein bind to Asp2 and Asp3; glycosylated protein binds less well. Interacts with the human cell surface glycoprotein GP1BA. Proteolytically cleaved by a metalloprotease. In terms of processing, both SSR1 and SSR2 domains are glycosylated. A truncated derivative (residues 1-2062) contains 105 nmol per nmol of protein, suggesting at least 10% of the apparent molecular weight is due to carbohydrates. Glucose and N-acetylglucosamine are present in a ratio of 30:73 residues per truncated polypeptide, as well as minor amounts of galactose and N-acetylgalactosamine. Glycosylation occurs intracellularly in the Ser-rich regions SSR1 and SSR2. Glycosylation of SSR2 domain may be required to prevent aggregation of GspB. It is probable that most of the Ser residues in SSR1 and SSR2 are O-GlcNAcylated. Sequential glycosylation by sugar transferases are able to generate complex sugar polymorphisms.

It is found in the secreted. The protein resides in the cell wall. Functionally, plays a role in virulence and host-pathogen interactions. Mediates binding to human platelets via interaction with the human cell surface glycoprotein GP1BA. Plays a positive role in biofilm formation, possibly by self-association via the basic region (BR). The protein is Platelet binding protein GspB (gspB) of Streptococcus gordonii.